A 371-amino-acid polypeptide reads, in one-letter code: Probable cysteine protease RDL5 (371 aa).

A signal peptide spans 1–23; the sequence is MGYAKSAMLIFLLALVIASCATA. Residues 24–143 constitute a propeptide, activation peptide; that stretch reads MDMSVVSSND…NRYKTSDGDV (120 aa). An N-linked (GlcNAc...) asparagine glycan is attached at Asn-94. Intrachain disulfides connect Cys-165-Cys-206, Cys-199-Cys-239, and Cys-298-Cys-349. The active site involves Cys-168. Active-site residues include His-304 and Asn-324.

This sequence belongs to the peptidase C1 family. In terms of tissue distribution, expressed in roots, inflorescences and siliques.

Possesses protease activity in vitro. In Arabidopsis thaliana (Mouse-ear cress), this protein is Probable cysteine protease RDL5.